Consider the following 391-residue polypeptide: Chaperone protein DnaJ (391 aa).

One can recognise a J domain in the interval 2–67; sequence DYYDVLGVSK…QKRESYDRYG (66 aa). Residues 148-226 form a CR-type zinc finger; that stretch reads GVEKELLVSG…CRGQGRVKDK (79 aa). Zn(2+) is bound by residues C161, C164, C178, C181, C200, C203, C214, and C217. 4 CXXCXGXG motif repeats span residues 161 to 168, 178 to 185, 200 to 207, and 214 to 221; these read CTTCSGSG, CERCKGSG, CPECGGEG, and CSNCRGQG.

The protein belongs to the DnaJ family. In terms of assembly, homodimer. It depends on Zn(2+) as a cofactor.

The protein localises to the cytoplasm. In terms of biological role, participates actively in the response to hyperosmotic and heat shock by preventing the aggregation of stress-denatured proteins and by disaggregating proteins, also in an autonomous, DnaK-independent fashion. Unfolded proteins bind initially to DnaJ; upon interaction with the DnaJ-bound protein, DnaK hydrolyzes its bound ATP, resulting in the formation of a stable complex. GrpE releases ADP from DnaK; ATP binding to DnaK triggers the release of the substrate protein, thus completing the reaction cycle. Several rounds of ATP-dependent interactions between DnaJ, DnaK and GrpE are required for fully efficient folding. Also involved, together with DnaK and GrpE, in the DNA replication of plasmids through activation of initiation proteins. In Chlamydia felis (strain Fe/C-56) (Chlamydophila felis), this protein is Chaperone protein DnaJ.